The primary structure comprises 98 residues: NADH-ubiquinone oxidoreductase chain 4L (98 aa).

The next 3 membrane-spanning stretches (helical) occupy residues 1–21, 29–49, and 61–81; these read MSLT…GLLM, SLLC…MVIL, and IILL…LVMV.

Belongs to the complex I subunit 4L family. In terms of assembly, core subunit of respiratory chain NADH dehydrogenase (Complex I) which is composed of 45 different subunits.

The protein localises to the mitochondrion inner membrane. It carries out the reaction a ubiquinone + NADH + 5 H(+)(in) = a ubiquinol + NAD(+) + 4 H(+)(out). Core subunit of the mitochondrial membrane respiratory chain NADH dehydrogenase (Complex I) which catalyzes electron transfer from NADH through the respiratory chain, using ubiquinone as an electron acceptor. Part of the enzyme membrane arm which is embedded in the lipid bilayer and involved in proton translocation. The protein is NADH-ubiquinone oxidoreductase chain 4L (MT-ND4L) of Vampyressa thyone (Northern little yellow-eared bat).